We begin with the raw amino-acid sequence, 687 residues long: Homoaconitase, mitochondrial (687 aa).

The transit peptide at M1–Y18 directs the protein to the mitochondrion. [4Fe-4S] cluster contacts are provided by C340, C400, and C403. The span at E481–E490 shows a compositional bias: acidic residues. The disordered stretch occupies residues E481 to L500.

This sequence belongs to the aconitase/IPM isomerase family. Requires [4Fe-4S] cluster as cofactor.

Its subcellular location is the mitochondrion. It catalyses the reaction (2R,3S)-homoisocitrate = cis-homoaconitate + H2O. It participates in amino-acid biosynthesis; L-lysine biosynthesis via AAA pathway; L-alpha-aminoadipate from 2-oxoglutarate: step 3/5. In terms of biological role, catalyzes the reversible hydration of cis-homoaconitate to (2R,3S)-homoisocitrate, a step in the alpha-aminoadipate pathway for lysine biosynthesis. The chain is Homoaconitase, mitochondrial (LYS4) from Yarrowia lipolytica (strain CLIB 122 / E 150) (Yeast).